The primary structure comprises 560 residues: Eukaryotic translation initiation factor 3 subunit D-1 (560 aa).

The segment at 98-166 (VQKPPHQRGR…RGPPPKMRES (69 aa)) is disordered. Over residues 100–121 (KPPHQRGRFRNMRNSRSGRGRN) the composition is skewed to basic residues. A Phosphothreonine modification is found at Thr-128. A compositionally biased stretch (basic residues) spans 147-156 (GRGMGKKFGH). Positions 291–305 (EFDLLTVNESSVEPP) are RNA gate.

This sequence belongs to the eIF-3 subunit D family. Component of the eukaryotic translation initiation factor 3 (eIF-3) complex. The eIF-3 complex interacts with pix.

It is found in the cytoplasm. In terms of biological role, mRNA cap-binding component of the eukaryotic translation initiation factor 3 (eIF-3) complex, which is involved in protein synthesis of a specialized repertoire of mRNAs and, together with other initiation factors, stimulates binding of mRNA and methionyl-tRNAi to the 40S ribosome. The eIF-3 complex specifically targets and initiates translation of a subset of mRNAs involved in cell proliferation. In the eIF-3 complex, eif3d specifically recognizes and binds the 7-methylguanosine cap of a subset of mRNAs. The protein is Eukaryotic translation initiation factor 3 subunit D-1 of Drosophila yakuba (Fruit fly).